We begin with the raw amino-acid sequence, 660 residues long: Bifunctional polymyxin resistance protein ArnA (660 aa).

A formyltransferase ArnAFT region spans residues M1 to L304. The Proton donor; for formyltransferase activity role is filled by H104. (6R)-10-formyltetrahydrofolate is bound by residues R114 and V136 to D140. The interval R314–S660 is dehydrogenase ArnADH. NAD(+) contacts are provided by residues D347 and D368–I369. Residues A393, Y398, and T432–S433 contribute to the UDP-alpha-D-glucuronate site. E434 (proton acceptor; for decarboxylase activity) is an active-site residue. UDP-alpha-D-glucuronate is bound by residues R460, N492, K526–R535, and Y613. R619 acts as the Proton donor; for decarboxylase activity in catalysis.

In the N-terminal section; belongs to the Fmt family. UDP-L-Ara4N formyltransferase subfamily. The protein in the C-terminal section; belongs to the NAD(P)-dependent epimerase/dehydratase family. UDP-glucuronic acid decarboxylase subfamily. As to quaternary structure, homohexamer, formed by a dimer of trimers.

It carries out the reaction UDP-alpha-D-glucuronate + NAD(+) = UDP-beta-L-threo-pentopyranos-4-ulose + CO2 + NADH. It catalyses the reaction UDP-4-amino-4-deoxy-beta-L-arabinose + (6R)-10-formyltetrahydrofolate = UDP-4-deoxy-4-formamido-beta-L-arabinose + (6S)-5,6,7,8-tetrahydrofolate + H(+). The protein operates within nucleotide-sugar biosynthesis; UDP-4-deoxy-4-formamido-beta-L-arabinose biosynthesis; UDP-4-deoxy-4-formamido-beta-L-arabinose from UDP-alpha-D-glucuronate: step 1/3. Its pathway is nucleotide-sugar biosynthesis; UDP-4-deoxy-4-formamido-beta-L-arabinose biosynthesis; UDP-4-deoxy-4-formamido-beta-L-arabinose from UDP-alpha-D-glucuronate: step 3/3. It participates in bacterial outer membrane biogenesis; lipopolysaccharide biosynthesis. Functionally, bifunctional enzyme that catalyzes the oxidative decarboxylation of UDP-glucuronic acid (UDP-GlcUA) to UDP-4-keto-arabinose (UDP-Ara4O) and the addition of a formyl group to UDP-4-amino-4-deoxy-L-arabinose (UDP-L-Ara4N) to form UDP-L-4-formamido-arabinose (UDP-L-Ara4FN). The modified arabinose is attached to lipid A and is required for resistance to polymyxin and cationic antimicrobial peptides. This Salmonella enteritidis PT4 (strain P125109) protein is Bifunctional polymyxin resistance protein ArnA.